The following is a 752-amino-acid chain: Translation initiation factor IF-2 (752 aa).

The tract at residues 26–167 (RQGMGVKSHM…QPTQRKDKPL (142 aa)) is disordered. The segment covering 34–47 (HMSSVTPDQAQQLR) has biased composition (polar residues). Residues 72–81 (KQNNHQAQNH) show a composition bias toward low complexity. Basic and acidic residues predominate over residues 83-96 (QHHDHDKTQNERPQ). A compositionally biased stretch (polar residues) spans 101-129 (SRSNNGTKDNNQHQNNGGRFGGSLNNDQG). Over residues 131 to 150 (NGKRFNKKNKKNKKHNKNKR) the composition is skewed to basic residues. A compositionally biased stretch (basic and acidic residues) spans 151–167 (LREVAHKQPTQRKDKPL). In terms of domain architecture, tr-type G spans 253–422 (TRPAVVTVMG…LLQAEMLELK (170 aa)). The G1 stretch occupies residues 262–269 (GHVDHGKT). 262 to 269 (GHVDHGKT) is a GTP binding site. Residues 287–291 (GITQE) are G2. A G3 region spans residues 308–311 (DTPG). GTP-binding positions include 308–312 (DTPGH) and 362–365 (NKID). The G4 stretch occupies residues 362 to 365 (NKID). The segment at 398-400 (SAK) is G5.

Belongs to the TRAFAC class translation factor GTPase superfamily. Classic translation factor GTPase family. IF-2 subfamily.

It is found in the cytoplasm. Its function is as follows. One of the essential components for the initiation of protein synthesis. Protects formylmethionyl-tRNA from spontaneous hydrolysis and promotes its binding to the 30S ribosomal subunits. Also involved in the hydrolysis of GTP during the formation of the 70S ribosomal complex. This chain is Translation initiation factor IF-2, found in Limosilactobacillus reuteri (strain DSM 20016) (Lactobacillus reuteri).